Here is a 274-residue protein sequence, read N- to C-terminus: Ribosomal RNA small subunit methyltransferase A (274 aa).

His15, Leu17, Gly42, Glu64, Asp89, and Asn109 together coordinate S-adenosyl-L-methionine.

It belongs to the class I-like SAM-binding methyltransferase superfamily. rRNA adenine N(6)-methyltransferase family. RsmA subfamily.

The protein resides in the cytoplasm. The enzyme catalyses adenosine(1518)/adenosine(1519) in 16S rRNA + 4 S-adenosyl-L-methionine = N(6)-dimethyladenosine(1518)/N(6)-dimethyladenosine(1519) in 16S rRNA + 4 S-adenosyl-L-homocysteine + 4 H(+). Functionally, specifically dimethylates two adjacent adenosines (A1518 and A1519) in the loop of a conserved hairpin near the 3'-end of 16S rRNA in the 30S particle. May play a critical role in biogenesis of 30S subunits. This chain is Ribosomal RNA small subunit methyltransferase A, found in Synechococcus sp. (strain CC9605).